Consider the following 78-residue polypeptide: DNA-directed RNA polymerase subunit Rpo5 (78 aa).

This sequence belongs to the archaeal Rpo5/eukaryotic RPB5 RNA polymerase subunit family. Part of the RNA polymerase complex.

It localises to the cytoplasm. It catalyses the reaction RNA(n) + a ribonucleoside 5'-triphosphate = RNA(n+1) + diphosphate. DNA-dependent RNA polymerase (RNAP) catalyzes the transcription of DNA into RNA using the four ribonucleoside triphosphates as substrates. This Methanosarcina acetivorans (strain ATCC 35395 / DSM 2834 / JCM 12185 / C2A) protein is DNA-directed RNA polymerase subunit Rpo5.